Consider the following 323-residue polypeptide: Ribokinase (323 aa).

Substrate is bound by residues 26–28 (MTD), 54–58 (GKGAN), and Glu-155. ATP-binding positions include Asn-200, 236–241 (TLGASG), and Thr-257. K(+) contacts are provided by Asp-264 and Thr-266. Residues 269-270 (GD) and Asn-296 each bind ATP. Asp-270 provides a ligand contact to substrate. Asp-270 serves as the catalytic Proton acceptor. K(+) contacts are provided by Ser-302, Ala-305, Gly-307, and Ser-311.

The protein belongs to the carbohydrate kinase PfkB family. Ribokinase subfamily. Homodimer. Mg(2+) is required as a cofactor.

It is found in the cytoplasm. The protein resides in the nucleus. The enzyme catalyses D-ribose + ATP = D-ribose 5-phosphate + ADP + H(+). The protein operates within carbohydrate metabolism; D-ribose degradation; D-ribose 5-phosphate from beta-D-ribopyranose: step 2/2. Activated by a monovalent cation that binds near, but not in, the active site. The most likely occupant of the site in vivo is potassium. Ion binding induces a conformational change that may alter substrate affinity. Competitively inhibited by phosphonoacetic acid, etidronate, 2-carboxethylphosphonic acid, N-(phosphonomethyl)glycine, N-(phosphonomethyl)iminodiacetic acid and clodronate. Catalyzes the phosphorylation of ribose at O-5 in a reaction requiring ATP and magnesium. The resulting D-ribose-5-phosphate can then be used either for sythesis of nucleotides, histidine, and tryptophan, or as a component of the pentose phosphate pathway. This Mus musculus (Mouse) protein is Ribokinase.